The sequence spans 386 residues: MFPEPPTLGSPAPKTPPDSSRIRQGAVPAWVLATIVLGSGLLVFSSCFCLYRKRCRRRMGKKSQAQAQVHLQEVKELGRSYIDKVQPEIEELDRSPSMPGQQVSDKHQLGRLQYSLDYDFQTGQLLVGILQAQGLAALDLGGSSDPYVSVYLLPDKRRRHETKVHRQTLNPHFGETFAFKVPYVELGGRVLVMAVYDFDRFSRNDAIGEVRVPMSSVNLGRPVQAWRELQVAPKEEQEKLGDICFSLRYVPTAGKLTVIVLEAKNLKKMDVGGLSDPYVKVHLLQGGKKVRKKKTTIKKNTLNPYYNEAFSFEVPCDQVQKVQVELTVLDYDKLGKNEAIGRVAVGAAVGGAGLRHWADMLANPRRPIAQWHSLRPPDRARPIPAP.

Residues 1–16 (MFPEPPTLGSPAPKTP) are compositionally biased toward pro residues. Residues 1 to 21 (MFPEPPTLGSPAPKTPPDSSR) are disordered. The Vesicular portion of the chain corresponds to 1–24 (MFPEPPTLGSPAPKTPPDSSRIRQ). The chain crosses the membrane as a helical span at residues 25–45 (GAVPAWVLATIVLGSGLLVFS). The Cytoplasmic segment spans residues 46-386 (SCFCLYRKRC…PDRARPIPAP (341 aa)). 2 C2 domains span residues 108-227 (QLGR…QAWR) and 239-372 (KLGD…AQWH). Residues L138, D139, D145, D197, F198, D199, S202, D205, D270, D276, D330, and D332 each coordinate Ca(2+).

It belongs to the synaptotagmin family. Homodimer. Interacts with both alpha- and beta-tubulin. The cofactor is Ca(2+).

It localises to the cytoplasmic vesicle. It is found in the secretory vesicle. Its subcellular location is the synaptic vesicle membrane. The protein localises to the recycling endosome membrane. Functionally, may be involved in Ca(2+)-dependent exocytosis of secretory vesicles through Ca(2+) and phospholipid binding to the C2 domain or may serve as Ca(2+) sensors in the process of vesicular trafficking and exocytosis. Regulates the Ca(2+)-dependent secretion of norepinephrine in PC12 cells. Required for export from the endocytic recycling compartment to the cell surface. The chain is Synaptotagmin-5 (Syt5) from Mus musculus (Mouse).